A 423-amino-acid chain; its full sequence is Probable histone-binding protein rbbD (423 aa).

WD repeat units lie at residues 119–159 (NHEG…LEPT), 172–212 (GHKK…KSDS), 222–262 (GHTS…KPIH), 266–306 (AHNS…NRLH), 310–350 (SHTD…EEQN), and 367–407 (GHTS…YNDR).

The protein belongs to the WD repeat RBAP46/RBAP48/MSI1 family. Probably binds directly to helix 1 of the histone fold of histone H4, a region that is not accessible when H4 is in chromatin.

Its subcellular location is the nucleus. Functionally, core histone-binding subunit that may target chromatin assembly factors, chromatin remodeling factors and histone deacetylases to their histone substrates in a manner that is regulated by nucleosomal DNA. Component of several complexes which regulate chromatin metabolism. The protein is Probable histone-binding protein rbbD (rbbD) of Dictyostelium discoideum (Social amoeba).